Reading from the N-terminus, the 372-residue chain is MGWLRKKKKPKSDIASERGAKLLEELIECCDGKSNPIKFFSADEILKATNDFSDSNFVLRLEVPFKWYSGKNENHPMILIKKDVGWWSGLRVDRLCRDIAVSSMVSGHKNFMKLVGCCLELDYPVMVYHSVKKHYKLEISEQPWKKRMKIAEDIATALAYLHTAFPRPFVYRILSHWNILLDEDGVAKLTDFSHCVSIPEGETFVRVDRDVGLYSYFADNYVRSGLVSDKTDVFAFGIFMGHRLLLGYEYYFEHYRGEEEESEDGFDSLMKRHARNLLSTLKEDRPMEEIADSKMIEKMGQISEQERCQMKAFLKLSLRCTGPSEEVPTMVEVAKELNKIQRSLFNDSSSLSSGQTQLDSAQDISSTVVLSN.

ATP contacts are provided by residues 1–4 and Lys-38; that span reads MGWL. One can recognise a Protein kinase domain in the interval 1-314; the sequence is MGWLRKKKKP…QERCQMKAFL (314 aa). Phosphotyrosine is present on residues Tyr-128 and Tyr-221. Residues 348-372 form a disordered region; it reads SSSLSSGQTQLDSAQDISSTVVLSN. Residues 354 to 372 show a composition bias toward polar residues; sequence GQTQLDSAQDISSTVVLSN.

This sequence belongs to the protein kinase superfamily.

This Arabidopsis thaliana (Mouse-ear cress) protein is Probable inactive receptor-like protein kinase At1g65250.